We begin with the raw amino-acid sequence, 918 residues long: Eukaryotic translation initiation factor 3 subunit C (918 aa).

The tract at residues 1–174 (MSRFFKGGSS…EEEGRRVVKS (174 aa)) is disordered. Phosphoserine occurs at positions 10, 12, 16, 19, and 20. Composition is skewed to acidic residues over residues 36–47 (SSSEEESSEEES), 54–67 (ESSE…ESEV), and 79–128 (EDSE…ESDE). Position 667 is a phosphothreonine (threonine 667). The PCI domain maps to 681-856 (FHMHINLELL…GAIIFERVEI (176 aa)). Residues 879 to 918 (KLYEQKTQHTNPQENRRRDKGGSVKRRNERTENRNRSDMN) are disordered. The span at 907–918 (ERTENRNRSDMN) shows a compositional bias: basic and acidic residues.

The protein belongs to the eIF-3 subunit C family. As to quaternary structure, component of the eukaryotic translation initiation factor 3 (eIF-3) complex. The eIF-3 complex appears to include tif32/eif3a, SPAC25G10.08/eif3b, tif33/eif3c, SPBC4C3.07/eif3f, tif35/eif3g and sum1/eif3i. This set of common subunits may also associate exclusively with either moe1/eif3d and int6/eif3e, or with SPAC821.05/eif3h and SPAC1751.03/eif3m. The eIF-3 complex may also include SPAC3A12.13c/eif3j.

The protein localises to the cytoplasm. Component of the eukaryotic translation initiation factor 3 (eIF-3) complex, which is involved in protein synthesis of a specialized repertoire of mRNAs and, together with other initiation factors, stimulates binding of mRNA and methionyl-tRNAi to the 40S ribosome. The eIF-3 complex specifically targets and initiates translation of a subset of mRNAs involved in cell proliferation. This is Eukaryotic translation initiation factor 3 subunit C (nip1) from Schizosaccharomyces pombe (strain 972 / ATCC 24843) (Fission yeast).